A 453-amino-acid polypeptide reads, in one-letter code: MGGLKFHVLMYPWFATGHMTPFLFLANKLAEKGHTVTFLLPKKSLKQLEHFNLFPHNIVFRSVTVPHVDGLPVGTETASEIPVTSTDLLMSAMDLTRDQVEAVVRAVEPDLIFFDFAHWIPEVARDFGLKTVKYVVVSASTIASMLVPGGELGVPPPGYPSSKVLLRKQDAYTMKKLEPTNTIDVGPNLLERVTTSLMNSDVIAIRTAREIEGNFCDYIEKHCRKKVLLTGPVFPEPDKTRELEERWVKWLSGYEPDSVVFCALGSQVILEKDQFQELCLGMELTGSPFLVAVKPPRGSSTIQEALPEGFEERVKGRGLVWGGWVQQPLILSHPSVGCFVSHCGFGSMWESLLSDCQIVLVPQLGDQVLNTRLLSDELKVSVEVAREETGWFSKESLCDAVNSVMKRDSELGNLVRKNHTKWRETVASPGLMTGYVDAFVESLQDLVSGTTHD.

UDP-alpha-D-glucose is bound by residues Ser-266, 325–327 (VQQ), 342–350 (HCGFGSMWE), and 364–367 (LGDQ).

The protein belongs to the UDP-glycosyltransferase family.

This chain is UDP-glycosyltransferase 79B3 (UGT79B3), found in Arabidopsis thaliana (Mouse-ear cress).